Here is a 307-residue protein sequence, read N- to C-terminus: Ornithine carbamoyltransferase (307 aa).

Carbamoyl phosphate is bound by residues 55–58 (STRT), Gln82, Arg106, and 133–136 (HPCQ). L-ornithine-binding positions include Asn164, Asp224, and 228–229 (SM). Residues 263-264 (CL) and Arg291 each bind carbamoyl phosphate.

It belongs to the aspartate/ornithine carbamoyltransferase superfamily. OTCase family.

The protein resides in the cytoplasm. The enzyme catalyses carbamoyl phosphate + L-ornithine = L-citrulline + phosphate + H(+). It participates in amino-acid biosynthesis; L-arginine biosynthesis; L-arginine from L-ornithine and carbamoyl phosphate: step 1/3. In terms of biological role, reversibly catalyzes the transfer of the carbamoyl group from carbamoyl phosphate (CP) to the N(epsilon) atom of ornithine (ORN) to produce L-citrulline. The polypeptide is Ornithine carbamoyltransferase (Bradyrhizobium diazoefficiens (strain JCM 10833 / BCRC 13528 / IAM 13628 / NBRC 14792 / USDA 110)).